A 349-amino-acid polypeptide reads, in one-letter code: 4-hydroxythreonine-4-phosphate dehydrogenase (349 aa).

Residues His141 and Thr142 each coordinate substrate. A divalent metal cation contacts are provided by His176, His221, and His276. 3 residues coordinate substrate: Lys284, Asn293, and Arg302.

Belongs to the PdxA family. As to quaternary structure, homodimer. It depends on Zn(2+) as a cofactor. The cofactor is Mg(2+). Co(2+) serves as cofactor.

It localises to the cytoplasm. It carries out the reaction 4-(phosphooxy)-L-threonine + NAD(+) = 3-amino-2-oxopropyl phosphate + CO2 + NADH. Its pathway is cofactor biosynthesis; pyridoxine 5'-phosphate biosynthesis; pyridoxine 5'-phosphate from D-erythrose 4-phosphate: step 4/5. Catalyzes the NAD(P)-dependent oxidation of 4-(phosphooxy)-L-threonine (HTP) into 2-amino-3-oxo-4-(phosphooxy)butyric acid which spontaneously decarboxylates to form 3-amino-2-oxopropyl phosphate (AHAP). The polypeptide is 4-hydroxythreonine-4-phosphate dehydrogenase (Methylorubrum extorquens (strain PA1) (Methylobacterium extorquens)).